A 130-amino-acid chain; its full sequence is Sulfurtransferase TusD (130 aa).

Cysteine 80 serves as the catalytic Cysteine persulfide intermediate.

This sequence belongs to the DsrE/TusD family. In terms of assembly, heterohexamer, formed by a dimer of trimers. The hexameric TusBCD complex contains 2 copies each of TusB, TusC and TusD. The TusBCD complex interacts with TusE.

Its subcellular location is the cytoplasm. Functionally, part of a sulfur-relay system required for 2-thiolation of 5-methylaminomethyl-2-thiouridine (mnm(5)s(2)U) at tRNA wobble positions. Accepts sulfur from TusA and transfers it in turn to TusE. In Proteus mirabilis (strain HI4320), this protein is Sulfurtransferase TusD.